The chain runs to 395 residues: Phosphopentomutase (395 aa).

Residues Asp14, Asp286, His291, Asp327, His328, and His339 each coordinate Mn(2+).

The protein belongs to the phosphopentomutase family. It depends on Mn(2+) as a cofactor.

It localises to the cytoplasm. The catalysed reaction is 2-deoxy-alpha-D-ribose 1-phosphate = 2-deoxy-D-ribose 5-phosphate. The enzyme catalyses alpha-D-ribose 1-phosphate = D-ribose 5-phosphate. It participates in carbohydrate degradation; 2-deoxy-D-ribose 1-phosphate degradation; D-glyceraldehyde 3-phosphate and acetaldehyde from 2-deoxy-alpha-D-ribose 1-phosphate: step 1/2. Functionally, isomerase that catalyzes the conversion of deoxy-ribose 1-phosphate (dRib-1-P) and ribose 1-phosphate (Rib-1-P) to deoxy-ribose 5-phosphate (dRib-5-P) and ribose 5-phosphate (Rib-5-P), respectively. The protein is Phosphopentomutase of Staphylococcus haemolyticus (strain JCSC1435).